A 722-amino-acid chain; its full sequence is Solute carrier organic anion transporter family member 4A1 (722 aa).

The interval 1 to 52 is disordered; the sequence is MPLHQLGDKPLTFPSPNSAMENGLDHTPPSRRASPGTPLSPGSLRSAAHSPL. Topologically, residues 1–103 are cytoplasmic; it reads MPLHQLGDKP…PCLQVLNTPK (103 aa). Residue Ser34 is modified to Phosphoserine. At Thr37 the chain carries Phosphothreonine. Phosphoserine occurs at positions 40, 43, 46, and 50. Residues 104-124 form a helical membrane-spanning segment; that stretch reads GILFFLCAAAFLQGMTVNGFI. The Extracellular portion of the chain corresponds to 125–143; that stretch reads NTVITSLERRYDLHSYQSG. A helical transmembrane segment spans residues 144–164; that stretch reads LIASSYDIAACLCLTFVSYFG. Residues 165–170 lie on the Cytoplasmic side of the membrane; sequence GSGHKP. A helical transmembrane segment spans residues 171 to 195; the sequence is RWLGWGVLLMGTGSLVFALPHFTAG. Residues 196–222 are Extracellular-facing; it reads RYEVELDAGVRTCPANPGAVCADSTSG. The chain crosses the membrane as a helical span at residues 223–253; the sequence is LSRYQLVFMLGQFLHGVGATPLYTLGVTYLD. Over 254–272 the chain is Cytoplasmic; it reads ENVKSSCSPVYIAIFYTAA. Residues 273 to 293 form a helical membrane-spanning segment; the sequence is ILGPAAGYLIGGALLNIYTEM. Over 294-307 the chain is Extracellular; that stretch reads GRRTELTTESPLWV. The chain crosses the membrane as a helical span at residues 308-332; that stretch reads GAWWVGFLGSGAAAFFTAVPILGYP. The Cytoplasmic segment spans residues 333–378; it reads RQLPGSQRYAVMRAAEMHQLKDSSRGEASNPDFGKTIRDLPLSIWL. The helical transmembrane segment at 379–400 threads the bilayer; sequence LLKNPTFILLCLAGATEATLIT. The Extracellular segment spans residues 401–420; sequence GMSTFSPKFLESQFSLSASE. Residues 421–444 traverse the membrane as a helical segment; it reads AATLFGYLVVPAGGGGTFLGGFFV. Topologically, residues 445–448 are cytoplasmic; sequence NKLR. Residues 449–471 form a helical membrane-spanning segment; that stretch reads LRGSAVIKFCLFCTVVSLLGILV. Over 472–580 the chain is Extracellular; that stretch reads FSLHCPSVPM…TSTCQRKPLL (109 aa). One can recognise a Kazal-like domain in the interval 498-555; that stretch reads LNLTAPCNAACSCQPEHYSPVCGSDGLMYFSLCHAGCPAATETNVDGQKVYRDCSCIP. Residue Asn499 is glycosylated (N-linked (GlcNAc...) asparagine). Cystine bridges form between Cys504/Cys534, Cys510/Cys530, and Cys519/Cys553. Asn557 carries N-linked (GlcNAc...) asparagine glycosylation. The chain crosses the membrane as a helical span at residues 581 to 603; it reads LVFIFVVIFFTFLSSIPALTATL. The Cytoplasmic segment spans residues 604 to 612; sequence RCVRDPQRS. A helical transmembrane segment spans residues 613–638; it reads FALGIQWIVVRILGGIPGPIAFGWVI. The Extracellular portion of the chain corresponds to 639–671; that stretch reads DKACLLWQDQCGQQGSCLVYQNSAMSRYILIMG. The helical transmembrane segment at 672 to 689 threads the bilayer; sequence LLYKVLGVLFFAIACFLY. At 690–722 the chain is on the cytoplasmic side; sequence KPLSESSDGLETCLPSQSSAPDSATDSQLQSSV. The tract at residues 703–722 is disordered; the sequence is LPSQSSAPDSATDSQLQSSV.

The protein belongs to the organo anion transporter (TC 2.A.60) family. As to expression, widely expressed. Expressed in placental trophoblasts. Expressed in pancreas, kidney, skeletal muscle, liver, lung, brain, heart, colon, small intestine, ovary, testis, prostate, thymus and spleen. In testis, primarily localized to Leydig cells.

It is found in the cell membrane. It carries out the reaction 3,3',5-triiodo-L-thyronine(out) + L-glutamate(in) = 3,3',5-triiodo-L-thyronine(in) + L-glutamate(out). The catalysed reaction is L-thyroxine(out) + L-glutamate(in) = L-thyroxine(in) + L-glutamate(out). It catalyses the reaction estrone 3-sulfate(out) + L-glutamate(in) = estrone 3-sulfate(in) + L-glutamate(out). The enzyme catalyses taurocholate(out) + L-glutamate(in) = taurocholate(in) + L-glutamate(out). It carries out the reaction 3,3',5-triiodo-L-thyronine(out) = 3,3',5-triiodo-L-thyronine(in). The catalysed reaction is L-thyroxine(out) = L-thyroxine(in). It catalyses the reaction 3,3',5'-triiodo-L-thyronine(out) = 3,3',5'-triiodo-L-thyronine(in). The enzyme catalyses estrone 3-sulfate(out) = estrone 3-sulfate(in). It carries out the reaction 17beta-estradiol 17-O-(beta-D-glucuronate)(out) = 17beta-estradiol 17-O-(beta-D-glucuronate)(in). The catalysed reaction is taurocholate(out) = taurocholate(in). It catalyses the reaction prostaglandin E2(out) = prostaglandin E2(in). In terms of biological role, organic anion antiporter with apparent broad substrate specificity. Recognizes various substrates including thyroid hormones 3,3',5-triiodo-L-thyronine (T3), L-thyroxine (T4) and 3,3',5'-triiodo-L-thyronine (rT3), conjugated steroids such as estrone 3-sulfate and estradiol 17-beta glucuronide, bile acids such as taurocholate and prostanoids such as prostaglandin E2, likely operating in a tissue-specific manner. May be involved in uptake of metabolites from the circulation into organs such as kidney, liver or placenta. Possibly drives the selective transport of thyroid hormones and estrogens coupled to an outward glutamate gradient across the microvillous membrane of the placenta. The transport mechanism, its electrogenicity and potential tissue-specific counterions remain to be elucidated. This chain is Solute carrier organic anion transporter family member 4A1 (SLCO4A1), found in Homo sapiens (Human).